The following is a 760-amino-acid chain: DNA replication licensing factor mcm7 (760 aa).

One can recognise an MCM domain in the interval 353–559 (VYEKLAKSIA…ETDEHLAQHV (207 aa)). ATP is bound by residues tyrosine 366, glycine 406, alanine 408, lysine 409, serine 410, asparagine 511, arginine 536, and arginine 630. Residues 535–538 (SRFD) carry the Arginine finger motif.

The protein belongs to the MCM family. As to quaternary structure, component of the mcm2-7 complex. The complex forms a toroidal hexameric ring with the proposed subunit order mcm2-mcm6-mcm4-mcm7-mcm3-mcm5. The heterodimers of mcm4/mcm6 and mcm3/mcm5 interact with mcm2 and mcm7. Interacts with sld3 and mcm10.

The protein localises to the nucleus. The enzyme catalyses ATP + H2O = ADP + phosphate + H(+). Its function is as follows. Acts as a component of the MCM2-7 complex (MCM complex) which is the replicative helicase essential for 'once per cell cycle' DNA replication initiation and elongation in eukaryotic cells. Core component of CDC45-MCM-GINS (CMG) helicase, the molecular machine that unwinds template DNA during replication, and around which the replisome is built. The active ATPase sites in the MCM2-7 ring are formed through the interaction surfaces of two neighboring subunits such that a critical structure of a conserved arginine finger motif is provided in trans relative to the ATP-binding site of the Walker A box of the adjacent subunit. The six ATPase active sites, however, are likely to contribute differentially to the complex helicase activity. Required for the progression of S phase. The sequence is that of DNA replication licensing factor mcm7 (mcm7) from Schizosaccharomyces pombe (strain 972 / ATCC 24843) (Fission yeast).